A 274-amino-acid chain; its full sequence is Proteasome subunit beta (274 aa).

A propeptide spans 1–52 (MADPLGAAGRLPAVFMTPGTSSFADFLSRSAPHLLPGARSGLPGPVTEVAHG) (removed in mature form; by autocatalysis). Thr53 serves as the catalytic Nucleophile.

It belongs to the peptidase T1B family. The 20S proteasome core is composed of 14 alpha and 14 beta subunits that assemble into four stacked heptameric rings, resulting in a barrel-shaped structure. The two inner rings, each composed of seven catalytic beta subunits, are sandwiched by two outer rings, each composed of seven alpha subunits. The catalytic chamber with the active sites is on the inside of the barrel. Has a gated structure, the ends of the cylinder being occluded by the N-termini of the alpha-subunits. Is capped by the proteasome-associated ATPase, ARC.

Its subcellular location is the cytoplasm. It carries out the reaction Cleavage of peptide bonds with very broad specificity.. It functions in the pathway protein degradation; proteasomal Pup-dependent pathway. With respect to regulation, the formation of the proteasomal ATPase ARC-20S proteasome complex, likely via the docking of the C-termini of ARC into the intersubunit pockets in the alpha-rings, may trigger opening of the gate for substrate entry. Interconversion between the open-gate and close-gate conformations leads to a dynamic regulation of the 20S proteasome proteolysis activity. In terms of biological role, component of the proteasome core, a large protease complex with broad specificity involved in protein degradation. The protein is Proteasome subunit beta of Frankia casuarinae (strain DSM 45818 / CECT 9043 / HFP020203 / CcI3).